The primary structure comprises 354 residues: UDP-3-O-acylglucosamine N-acyltransferase (354 aa).

Histidine 247 functions as the Proton acceptor in the catalytic mechanism.

This sequence belongs to the transferase hexapeptide repeat family. LpxD subfamily. Homotrimer.

The catalysed reaction is a UDP-3-O-[(3R)-3-hydroxyacyl]-alpha-D-glucosamine + a (3R)-hydroxyacyl-[ACP] = a UDP-2-N,3-O-bis[(3R)-3-hydroxyacyl]-alpha-D-glucosamine + holo-[ACP] + H(+). It functions in the pathway bacterial outer membrane biogenesis; LPS lipid A biosynthesis. Functionally, catalyzes the N-acylation of UDP-3-O-acylglucosamine using 3-hydroxyacyl-ACP as the acyl donor. Is involved in the biosynthesis of lipid A, a phosphorylated glycolipid that anchors the lipopolysaccharide to the outer membrane of the cell. This Chlamydia trachomatis serovar L2 (strain ATCC VR-902B / DSM 19102 / 434/Bu) protein is UDP-3-O-acylglucosamine N-acyltransferase.